Consider the following 284-residue polypeptide: Four and a half LIM domains protein 5 (284 aa).

The C4-type zinc-finger motif lies at 8–32; that stretch reads CQYCTASLLGKKYVLKDDSPYCVTC. 4 LIM zinc-binding domains span residues 39 to 100, 101 to 160, 161 to 220, and 223 to 283; these read NYCE…ECSS, KCFH…KEFA, HYCN…LYAN, and VACS…MDTD.

Interacts with CREM (via the third LIM domain). Interacts (via second LIM domain) with SPAG8. Testis-specific (at protein level).

It is found in the nucleus. May be involved in the regulation of spermatogenesis. Stimulates CREM transcriptional activity in a phosphorylation-independent manner. In Homo sapiens (Human), this protein is Four and a half LIM domains protein 5 (FHL5).